The following is a 294-amino-acid chain: Potassium-transporting ATPase subunit beta (294 aa).

Residues 1 to 36 (MAALQEKKSCSQRMAEFRQYCWNPDTGQMLGRTPAR) lie on the Cytoplasmic side of the membrane. The helical; Signal-anchor for type II membrane protein transmembrane segment at 37 to 57 (WVWISLYYAAFYVVMTGLFAL) threads the bilayer. Topologically, residues 58 to 294 (CIYVLMQTID…KVEFKLTIQK (237 aa)) are extracellular. N-linked (GlcNAc...) asparagine glycosylation is found at Asn-99, Asn-103, Asn-130, Asn-146, and Asn-161. A disulfide bridge connects residues Cys-131 and Cys-152. Cys-162 and Cys-178 are disulfide-bonded. 2 N-linked (GlcNAc...) asparagine glycosylation sites follow: Asn-193 and Asn-225. The interval 194-294 (NTAPRVDCTF…KVEFKLTIQK (101 aa)) is immunoglobulin-like. A disulfide bridge connects residues Cys-201 and Cys-266.

It belongs to the X(+)/potassium ATPases subunit beta family. As to quaternary structure, the ATPase pump is composed of two subunits: alpha (catalytic) and beta (regulatory). Interacts with alpha subunit ATP12A; this interaction is required for the formation of a functionally active pump and targeting at the plasma membrane. Interacts (via N-terminus) with alpha subunit ATP4A (via the P-domain). Post-translationally, N-glycosylation is necessary for assembly and functional expression of the pump at the plasma membrane. As to expression, stomach.

The protein resides in the apical cell membrane. The protein localises to the cell membrane. In terms of biological role, the beta subunit of the gastric H(+)/K(+) ATPase pump which transports H(+) ions in exchange for K(+) ions across the apical membrane of parietal cells. Plays a structural and regulatory role in the assembly and membrane targeting of a functionally active pump. Within a transport cycle, the transfer of a H(+) ion across the membrane is coupled to ATP hydrolysis and is associated with a transient phosphorylation of the alpha subunit that shifts the pump conformation from inward-facing (E1) to outward-facing state (E2). Interacts with the phosphorylation domain of the alpha subunit and functions as a ratchet, stabilizing the lumenal-open E2 conformation and preventing the reverse reaction of the transport cycle. In Rattus norvegicus (Rat), this protein is Potassium-transporting ATPase subunit beta (Atp4b).